The primary structure comprises 207 residues: Serotonin N-acetyltransferase (207 aa).

At Thr-31 the chain carries Phosphothreonine; by PKA. Residues 35 to 194 form the N-acetyltransferase domain; it reads SEFRCLTPQD…SLTFMELQCS (160 aa). Position 124 (Leu-124) interacts with substrate. Acetyl-CoA contacts are provided by residues 124–126 and 132–137; these read LAV and QQGKGS. Met-159 provides a ligand contact to substrate. Acetyl-CoA is bound at residue 168–170; that stretch reads YEK. Phosphoserine is present on Ser-205.

It belongs to the acetyltransferase family. AANAT subfamily. Monomer. Interacts with several 14-3-3 proteins, including YWHAB, YWHAE, YWHAG and YWHAZ, preferentially when phosphorylated at Thr-31. Phosphorylation on Ser-205 also allows binding to YWHAZ, but with lower affinity. The interaction with YWHAZ considerably increases affinity for arylalkylamines and acetyl-CoA and protects the enzyme from dephosphorylation and proteasomal degradation. It may also prevent thiol-dependent inactivation. Post-translationally, cAMP-dependent phosphorylation on both N-terminal Thr-31 and C-terminal Ser-205 regulates AANAT activity by promoting interaction with 14-3-3 proteins. In terms of tissue distribution, highly expressed in pineal gland and retina. Also detected in heart and intestine.

It localises to the cytoplasm. It catalyses the reaction a 2-arylethylamine + acetyl-CoA = an N-acetyl-2-arylethylamine + CoA + H(+). It participates in aromatic compound metabolism; melatonin biosynthesis; melatonin from serotonin: step 1/2. Its function is as follows. Controls the night/day rhythm of melatonin production in the pineal gland. Catalyzes the N-acetylation of serotonin into N-acetylserotonin, the penultimate step in the synthesis of melatonin. This chain is Serotonin N-acetyltransferase (AANAT), found in Mesocricetus auratus (Golden hamster).